A 358-amino-acid polypeptide reads, in one-letter code: Photosystem II protein D1 2 (358 aa).

3 consecutive transmembrane segments (helical) span residues 28–45 (YVGW…AATT), 117–132 (HFLI…QWEL), and 141–155 (WICV…AAFA). Residue His117 participates in chlorophyll a binding. Position 125 (Tyr125) interacts with pheophytin a. Residues Asp169 and Glu188 each contribute to the [CaMn4O5] cluster site. A helical membrane pass occupies residues 196–217 (FHMLGVAGVFGGSLFSAMHGSL). Residue His197 participates in chlorophyll a binding. A quinone is bound by residues His214 and 263-264 (SF). Position 214 (His214) interacts with Fe cation. His271 contacts Fe cation. A helical membrane pass occupies residues 273 to 287 (FLAAWPVVGIWFTSM). The [CaMn4O5] cluster site is built by His331, Glu332, Asp341, and Ala343. A propeptide spanning residues 344–358 (ATESTPVALQAPTIG) is cleaved from the precursor.

This sequence belongs to the reaction center PufL/M/PsbA/D family. In terms of assembly, PSII is composed of 1 copy each of membrane proteins PsbA, PsbB, PsbC, PsbD, PsbE, PsbF, PsbH, PsbI, PsbJ, PsbK, PsbL, PsbM, PsbT, PsbX, PsbY, PsbZ, Psb30/Ycf12, peripheral proteins PsbO, CyanoQ (PsbQ), PsbU, PsbV and a large number of cofactors. It forms dimeric complexes. The D1/D2 heterodimer binds P680, chlorophylls that are the primary electron donor of PSII, and subsequent electron acceptors. It shares a non-heme iron and each subunit binds pheophytin, quinone, additional chlorophylls, carotenoids and lipids. D1 provides most of the ligands for the Mn4-Ca-O5 cluster of the oxygen-evolving complex (OEC). There is also a Cl(-1) ion associated with D1 and D2, which is required for oxygen evolution. The PSII complex binds additional chlorophylls, carotenoids and specific lipids. is required as a cofactor. Tyr-160 forms a radical intermediate that is referred to as redox-active TyrZ, YZ or Y-Z. Post-translationally, C-terminally processed by CtpA; processing is essential to allow assembly of the oxygen-evolving complex and thus photosynthetic growth.

It is found in the cellular thylakoid membrane. The enzyme catalyses 2 a plastoquinone + 4 hnu + 2 H2O = 2 a plastoquinol + O2. Photosystem II (PSII) is a light-driven water:plastoquinone oxidoreductase that uses light energy to abstract electrons from H(2)O, generating O(2) and a proton gradient subsequently used for ATP formation. It consists of a core antenna complex that captures photons, and an electron transfer chain that converts photonic excitation into a charge separation. The D1/D2 (PsbA/PsbD) reaction center heterodimer binds P680, the primary electron donor of PSII as well as several subsequent electron acceptors. This is Photosystem II protein D1 2 from Synechococcus sp. (strain WH7803).